The chain runs to 414 residues: Gamma-glutamyl phosphate reductase (414 aa).

Belongs to the gamma-glutamyl phosphate reductase family.

Its subcellular location is the cytoplasm. It carries out the reaction L-glutamate 5-semialdehyde + phosphate + NADP(+) = L-glutamyl 5-phosphate + NADPH + H(+). Its pathway is amino-acid biosynthesis; L-proline biosynthesis; L-glutamate 5-semialdehyde from L-glutamate: step 2/2. Catalyzes the NADPH-dependent reduction of L-glutamate 5-phosphate into L-glutamate 5-semialdehyde and phosphate. The product spontaneously undergoes cyclization to form 1-pyrroline-5-carboxylate. The polypeptide is Gamma-glutamyl phosphate reductase (Clostridium botulinum (strain Alaska E43 / Type E3)).